The sequence spans 396 residues: Elongation factor Tu (396 aa).

The tr-type G domain occupies 10-205; that stretch reads KPHVNIGTIG…ACDDNIPDPV (196 aa). Positions 19–26 are G1; the sequence is GHVDHGKT. 19-26 lines the GTP pocket; it reads GHVDHGKT. A Mg(2+)-binding site is contributed by T26. Positions 62–66 are G2; that stretch reads GITIN. Residues 83–86 are G3; that stretch reads DAPG. Residues 83-87 and 138-141 each bind GTP; these read DAPGH and NKCD. Positions 138–141 are G4; it reads NKCD. The G5 stretch occupies residues 175 to 177; the sequence is SAL.

Belongs to the TRAFAC class translation factor GTPase superfamily. Classic translation factor GTPase family. EF-Tu/EF-1A subfamily. In terms of assembly, monomer.

The protein localises to the cytoplasm. It catalyses the reaction GTP + H2O = GDP + phosphate + H(+). In terms of biological role, GTP hydrolase that promotes the GTP-dependent binding of aminoacyl-tRNA to the A-site of ribosomes during protein biosynthesis. The protein is Elongation factor Tu of Corynebacterium glutamicum (strain ATCC 13032 / DSM 20300 / JCM 1318 / BCRC 11384 / CCUG 27702 / LMG 3730 / NBRC 12168 / NCIMB 10025 / NRRL B-2784 / 534).